Here is a 106-residue protein sequence, read N- to C-terminus: UPF0145 protein NE1032 (106 aa).

It belongs to the UPF0145 family.

This Nitrosomonas europaea (strain ATCC 19718 / CIP 103999 / KCTC 2705 / NBRC 14298) protein is UPF0145 protein NE1032.